We begin with the raw amino-acid sequence, 142 residues long: Deoxyuridine 5'-triphosphate nucleotidohydrolase (142 aa).

Residues 62–64, asparagine 75, and 79–81 contribute to the substrate site; these read RSG and TID.

This sequence belongs to the dUTPase family. Requires Mg(2+) as cofactor.

The catalysed reaction is dUTP + H2O = dUMP + diphosphate + H(+). Its pathway is pyrimidine metabolism; dUMP biosynthesis; dUMP from dCTP (dUTP route): step 2/2. Functionally, this enzyme is involved in nucleotide metabolism: it produces dUMP, the immediate precursor of thymidine nucleotides and it decreases the intracellular concentration of dUTP so that uracil cannot be incorporated into DNA. The protein is Deoxyuridine 5'-triphosphate nucleotidohydrolase of Clostridium novyi (strain NT).